A 484-amino-acid chain; its full sequence is Probable D-lactate dehydrogenase, mitochondrial (484 aa).

The N-terminal 52 residues, 1–52 (MAMLLRVATQRLSPWRSFCSRGSQGGLSQDFVEALKAVVGSPHVSTASAVRE), are a transit peptide targeting the mitochondrion. At K36 the chain carries N6-acetyllysine. Residues 62–242 (RCQPPDAVVW…TSTTLRLHPA (181 aa)) form the FAD-binding PCMH-type domain. K292 carries the N6-acetyllysine modification. An N6-acetyllysine; alternate modification is found at K335. Residue K335 is modified to N6-succinyllysine; alternate. K422 and K449 each carry N6-acetyllysine.

The protein belongs to the FAD-binding oxidoreductase/transferase type 4 family. Interacts with CSRP3. FAD serves as cofactor. As to expression, readily detected in liver and kidney, with a weaker signal observed in heart, skeletal muscle, stomach, brain, and lung.

The protein resides in the mitochondrion. It catalyses the reaction (R)-lactate + 2 Fe(III)-[cytochrome c] = 2 Fe(II)-[cytochrome c] + pyruvate + 2 H(+). In terms of biological role, involved in D-lactate, but not L-lactate catabolic process. The polypeptide is Probable D-lactate dehydrogenase, mitochondrial (Mus musculus (Mouse)).